The sequence spans 140 residues: Nucleoside diphosphate kinase (140 aa).

ATP-binding residues include lysine 9, phenylalanine 57, arginine 85, threonine 91, arginine 102, and asparagine 112. Histidine 115 (pros-phosphohistidine intermediate) is an active-site residue.

Belongs to the NDK family. In terms of assembly, homotetramer. It depends on Mg(2+) as a cofactor.

It localises to the cytoplasm. It catalyses the reaction a 2'-deoxyribonucleoside 5'-diphosphate + ATP = a 2'-deoxyribonucleoside 5'-triphosphate + ADP. The catalysed reaction is a ribonucleoside 5'-diphosphate + ATP = a ribonucleoside 5'-triphosphate + ADP. Major role in the synthesis of nucleoside triphosphates other than ATP. The ATP gamma phosphate is transferred to the NDP beta phosphate via a ping-pong mechanism, using a phosphorylated active-site intermediate. In Chlorobaculum tepidum (strain ATCC 49652 / DSM 12025 / NBRC 103806 / TLS) (Chlorobium tepidum), this protein is Nucleoside diphosphate kinase.